Consider the following 106-residue polypeptide: Small ribosomal subunit protein uS10 (106 aa).

It belongs to the universal ribosomal protein uS10 family. Part of the 30S ribosomal subunit.

Its function is as follows. Involved in the binding of tRNA to the ribosomes. The polypeptide is Small ribosomal subunit protein uS10 (Prochlorococcus marinus (strain MIT 9312)).